The sequence spans 421 residues: ARAAARHYADQRIKVAKPVVEMDGDEMTRIIWQFIKEKLILPHVDVQLKYFDLGLPNRDQTNDQVTIDSALATQKYSVAVKCATITPDEARVEEFKLKKMWKSPNGTIRNILGGTVFREPIICKNIPRLVPGWTKPITIGRHAHGDQYKATDFVVDRAGTFKIVFTPKDGSSAKQWEVYNFPAGGVGMGMYNTDESISGFAHSCFQYAIQKKWPLYMSTKNTILKAYDGRFKDIFQEIFEKHYKTDFDKYKIWYEHRLIDDMVAQVLKSSGGFVWACKNYDGDVQSDILAQGFGSLGLMTSVLVCPDGKTIEAEAAHGTVTRHYREHQKGRPTSTNPIASIFAWTRGLEHRGKLDGNQDLIRFAQTLEKVCVETVESGAMTKDLAGCIHGLSNVKLNEHFLNTSDFLDTIKSNLDRALGRQ.

The transit peptide at 1–8 directs the protein to the mitochondrion; the sequence is ARAAARHY. 4 positions are modified to N6-acetyllysine: lysine 14, lysine 17, lysine 36, and lysine 38. N6-acetyllysine; alternate occurs at positions 49 and 75. Lysine 49 and lysine 75 each carry N6-succinyllysine; alternate. NADP(+)-binding positions include 84-86 and arginine 91; that span reads TIT. A D-threo-isocitrate-binding site is contributed by threonine 86. Residues 103 to 109 and arginine 118 contribute to the D-threo-isocitrate site; that span reads SPNGTIR. Lysine 124 carries the post-translational modification N6-acetyllysine. Lysine 135 bears the N6-acetyllysine; alternate mark. Lysine 135 carries the N6-succinyllysine; alternate modification. A D-threo-isocitrate-binding site is contributed by arginine 141. An N6-acetyllysine; alternate mark is found at lysine 149 and lysine 162. N6-succinyllysine; alternate is present on residues lysine 149 and lysine 162. The residue at position 168 (lysine 168) is an N6-acetyllysine. Lysine 225 carries the N6-acetyllysine; alternate modification. N6-succinyllysine; alternate is present on lysine 225. 4 positions are modified to N6-acetyllysine: lysine 232, lysine 241, lysine 244, and lysine 249. Lysine 251 is modified (N6-acetyllysine; alternate). Lysine 251 is modified (N6-succinyllysine; alternate). Aspartate 260 provides a ligand contact to Mn(2+). Lysine 268 contributes to the NADP(+) binding site. Residue aspartate 283 coordinates Mn(2+). Residues 318-323 and asparagine 336 contribute to the NADP(+) site; that span reads GTVTRH. Lysine 353 carries the N6-acetyllysine; alternate modification. N6-succinyllysine; alternate is present on lysine 353. Lysine 369, lysine 382, and lysine 411 each carry N6-acetyllysine.

The protein belongs to the isocitrate and isopropylmalate dehydrogenases family. Homodimer. It depends on Mg(2+) as a cofactor. The cofactor is Mn(2+). In terms of processing, acetylation at Lys-382 dramatically reduces catalytic activity. Deacetylated by SIRT3.

It localises to the mitochondrion. The enzyme catalyses D-threo-isocitrate + NADP(+) = 2-oxoglutarate + CO2 + NADPH. Functionally, plays a role in intermediary metabolism and energy production. It may tightly associate or interact with the pyruvate dehydrogenase complex. This is Isocitrate dehydrogenase [NADP], mitochondrial (IDH2) from Sus scrofa (Pig).